The sequence spans 58 residues: Conotoxin Leo-T2 (58 aa).

The first 22 residues, 1 to 22 (MRCLPVFIILPLLIPSAPSVDA), serve as a signal peptide directing secretion. A propeptide spanning residues 23–47 (QPMTEDDVPLASFHEQTLQELWNKR) is cleaved from the precursor.

It belongs to the conotoxin T superfamily. Post-translationally, contains 2 disulfide bonds that can be either 'C1-C3, C2-C4' or 'C1-C4, C2-C3', since these disulfide connectivities have been observed for conotoxins with cysteine framework V (for examples, see AC P0DQQ7 and AC P81755). As to expression, expressed by the venom duct.

The protein localises to the secreted. This Conus leopardus (Leopard cone) protein is Conotoxin Leo-T2.